A 102-amino-acid chain; its full sequence is uncharacterized protein (102 aa).

This sequence belongs to the Gram-positive plasmids replication protein type 2 family.

This is an uncharacterized protein from Staphylococcus aureus.